The following is a 199-amino-acid chain: Recombination protein RecR (199 aa).

A C4-type zinc finger spans residues 56–71; sequence CSICFNWSAEDPCEIC. In terms of domain architecture, Toprim spans 79–174; the sequence is STWCVVADVK…GLRMTRLAFG (96 aa).

Belongs to the RecR family.

Functionally, may play a role in DNA repair. It seems to be involved in an RecBC-independent recombinational process of DNA repair. It may act with RecF and RecO. This chain is Recombination protein RecR, found in Synechococcus sp. (strain JA-3-3Ab) (Cyanobacteria bacterium Yellowstone A-Prime).